Reading from the N-terminus, the 1175-residue chain is Structural maintenance of chromosomes protein 2-1 (1175 aa).

Positions 2–1161 constitute a Zinc-hook domain; it reads HIKEICLEGF…NVLFRTKFVD (1160 aa). ATP is bound at residue 32–39; the sequence is GLNGSGKS. A coiled-coil region spans residues 172 to 508; the sequence is RMYENKKEAA…AQLANFQFTY (337 aa). An SMC hinge domain is found at 518 to 638; sequence SKVKGVVAKL…KTTDVAKEVA (121 aa). Residues 673–1028 are a coiled coil; that stretch reads LRKLHDLAEA…ELDEKKKETL (356 aa).

Belongs to the SMC family. SMC2 subfamily. Forms a heterodimer with SMC4. Component of the condensin complex, which contains the SMC2 and SMC4 heterodimer, and three non SMC subunits that probably regulate the complex: CAPH, CAPD2 and CAPG. In terms of tissue distribution, highly expressed in roots and young floral buds.

It is found in the nucleus. Its function is as follows. Central component of the condensin complex, a complex required for conversion of interphase chromatin into mitotic-like condense chromosomes. The condensin complex probably introduces positive supercoils into relaxed DNA in the presence of type I topoisomerases and converts nicked DNA into positive knotted forms in the presence of type II topoisomerases. Also involved in chromosome segregation in meiosis. The sequence is that of Structural maintenance of chromosomes protein 2-1 (SMC2-1) from Arabidopsis thaliana (Mouse-ear cress).